A 130-amino-acid chain; its full sequence is Small ribosomal subunit protein uS8 (130 aa).

The protein belongs to the universal ribosomal protein uS8 family. As to quaternary structure, part of the 30S ribosomal subunit. Contacts proteins S5 and S12.

Functionally, one of the primary rRNA binding proteins, it binds directly to 16S rRNA central domain where it helps coordinate assembly of the platform of the 30S subunit. This chain is Small ribosomal subunit protein uS8, found in Phytoplasma mali (strain AT).